Reading from the N-terminus, the 29-residue chain is GFCAEAGIKCNDIHCCGNLKCKAVGSNRV.

2 disulfide bridges follow: Cys-3/Cys-16 and Cys-10/Cys-21.

As to expression, expressed by the venom gland.

It is found in the secreted. The sequence is that of U20-ctenitoxin-Co1a from Ctenus ornatus (Brazilian spider).